Consider the following 81-residue polypeptide: MKTLLLSLVVMTIVYLDLGYTLKCHESENLDDHVVCEEDETMCYKFTFVPFRDFEIVARGCSASCPEEKDVVCCSTDLCNK.

The first 21 residues, 1–21 (MKTLLLSLVVMTIVYLDLGYT), serve as a signal peptide directing secretion. Intrachain disulfides connect Cys24–Cys43, Cys36–Cys61, Cys65–Cys73, and Cys74–Cys79.

The protein belongs to the three-finger toxin family. Short-chain subfamily. Expressed by the venom gland.

The protein resides in the secreted. This Oxyuranus microlepidotus (Inland taipan) protein is Three-finger toxin 3FTx-Oxy6.